Consider the following 488-residue polypeptide: UDP-N-acetylmuramate--L-alanine ligase (488 aa).

An ATP-binding site is contributed by 127 to 133 (GTHGKTT).

It belongs to the MurCDEF family.

The protein localises to the cytoplasm. The catalysed reaction is UDP-N-acetyl-alpha-D-muramate + L-alanine + ATP = UDP-N-acetyl-alpha-D-muramoyl-L-alanine + ADP + phosphate + H(+). The protein operates within cell wall biogenesis; peptidoglycan biosynthesis. Cell wall formation. The polypeptide is UDP-N-acetylmuramate--L-alanine ligase (Shewanella putrefaciens (strain CN-32 / ATCC BAA-453)).